The sequence spans 42 residues: Small protein MntS (42 aa).

The protein resides in the cytoplasm. Required for repression of mntH by MntR. May function as a chaperone that makes manganese more available by delivering it to the necessary cellular locations when manganese is limiting. The sequence is that of Small protein MntS (mntS) from Escherichia coli (strain K12).